The sequence spans 541 residues: 5' exonuclease Apollo (541 aa).

Lys334 is covalently cross-linked (Glycyl lysine isopeptide (Lys-Gly) (interchain with G-Cter in SUMO2)). 2 disordered regions span residues 350-375 (TQGV…KKHK) and 450-489 (IGLG…TTHL). The span at 358 to 371 (PEEKADQVKVDRDS) shows a compositional bias: basic and acidic residues. Positions 492–507 (ESGGLALKYLLTPVDF) match the TBM motif.

Belongs to the DNA repair metallo-beta-lactamase (DRMBL) family. As to quaternary structure, interacts with TERF2; the interaction is direct. Interacts with MUS81, MRE11 and FANCD2. Interacts with HSPA2, HSPA8 and HSPA14. Interacts with SPAG5. Ubiquitinated, leading to its degradation. Interaction with TERF2 protects it from ubiquitination.

Its subcellular location is the chromosome. It is found in the telomere. The protein localises to the nucleus. The protein resides in the cytoplasm. It localises to the cytoskeleton. Its subcellular location is the microtubule organizing center. It is found in the centrosome. It catalyses the reaction a beta-lactam + H2O = a substituted beta-amino acid. Functionally, 5'-3' exonuclease that plays a central role in telomere maintenance and protection during S-phase. Participates in the protection of telomeres against non-homologous end-joining (NHEJ)-mediated repair, thereby ensuring that telomeres do not fuse. Plays a key role in telomeric loop (T loop) formation by being recruited by TERF2 at the leading end telomeres and by processing leading-end telomeres immediately after their replication via its exonuclease activity: generates 3' single-stranded overhang at the leading end telomeres avoiding blunt leading-end telomeres that are vulnerable to end-joining reactions and expose the telomere end in a manner that activates the DNA repair pathways. Together with TERF2, required to protect telomeres from replicative damage during replication by controlling the amount of DNA topoisomerase (TOP1, TOP2A and TOP2B) needed for telomere replication during fork passage and prevent aberrant telomere topology. Also involved in response to DNA damage: plays a role in response to DNA interstrand cross-links (ICLs) by facilitating double-strand break formation. In case of spindle stress, involved in prophase checkpoint. Possesses beta-lactamase activity, catalyzing the hydrolysis of penicillin G and nitrocefin. Exhibits no activity towards other beta-lactam antibiotic classes including cephalosporins (cefotaxime) and carbapenems (imipenem). This Rattus norvegicus (Rat) protein is 5' exonuclease Apollo (Dclre1b).